A 774-amino-acid polypeptide reads, in one-letter code: E3 ubiquitin-protein ligase RFWD3 (774 aa).

2 disordered regions span residues glycine 32–alanine 126 and proline 203–glutamate 281. 2 positions are modified to phosphoserine; by ATM and ATR: serine 59 and serine 75. Acidic residues predominate over residues leucine 92–methionine 103. The span at proline 108–asparagine 121 shows a compositional bias: polar residues. Over residues serine 223–glutamate 242 the composition is skewed to acidic residues. Residues cysteine 288–asparagine 332 form an RING-type; degenerate zinc finger. Residues arginine 358 to lysine 403 adopt a coiled-coil conformation. WD repeat units follow at residues isoleucine 493–threonine 535, tyrosine 536–aspartate 568, and lysine 583–proline 628.

Interacts with MDM2 and p53/TP53. Binds to the RPA complex via direct interaction with RPA2. Interacts with RAD51. Post-translationally, phosphorylated at Ser-59 and Ser-75 upon DNA damage by ATM or ATR. ATM phosphorylation occurs at early times upon DNA damage, while ATR is the major kinase at later times. Phosphorylation by ATM and ATR is required to stabilize p53/TP53. Part of the phosphorylation depends upon RPA2 presence.

The protein resides in the nucleus. It is found in the PML body. Its subcellular location is the cytoplasm. The catalysed reaction is S-ubiquitinyl-[E2 ubiquitin-conjugating enzyme]-L-cysteine + [acceptor protein]-L-lysine = [E2 ubiquitin-conjugating enzyme]-L-cysteine + N(6)-ubiquitinyl-[acceptor protein]-L-lysine.. It functions in the pathway protein modification; protein ubiquitination. Functionally, E3 ubiquitin-protein ligase required for the repair of DNA interstrand cross-links (ICL) in response to DNA damage. Plays a key role in RPA-mediated DNA damage signaling and repair. Acts by mediating ubiquitination of the RPA complex (RPA1, RPA2 and RPA3 subunits) and RAD51 at stalled replication forks, leading to remove them from DNA damage sites and promote homologous recombination. Also mediates the ubiquitination of p53/TP53 in the late response to DNA damage, and acts as a positive regulator of p53/TP53 stability, thereby regulating the G1/S DNA damage checkpoint. May act by catalyzing the formation of short polyubiquitin chains on p53/TP53 that are not targeted to the proteasome. In response to ionizing radiation, interacts with MDM2 and enhances p53/TP53 ubiquitination, possibly by restricting MDM2 from extending polyubiquitin chains on ubiquitinated p53/TP53. Required to translesion DNA synthesis across DNA-protein cross-link adducts by catalyzing ubiquitination of proteins on single-stranded DNA (ssDNA). This chain is E3 ubiquitin-protein ligase RFWD3 (Rfwd3), found in Mus musculus (Mouse).